Here is a 113-residue protein sequence, read N- to C-terminus: Hydrogenase maturation factor HypA (113 aa).

His-2 contacts Ni(2+). Residues Cys-73, Cys-76, Cys-89, and Cys-92 each contribute to the Zn(2+) site.

Belongs to the HypA/HybF family.

In terms of biological role, involved in the maturation of [NiFe] hydrogenases. Required for nickel insertion into the metal center of the hydrogenase. The polypeptide is Hydrogenase maturation factor HypA (Beijerinckia indica subsp. indica (strain ATCC 9039 / DSM 1715 / NCIMB 8712)).